A 208-amino-acid chain; its full sequence is Adapter protein MecA (208 aa).

It belongs to the MecA family. In terms of assembly, homodimer.

In terms of biological role, enables the recognition and targeting of unfolded and aggregated proteins to the ClpC protease or to other proteins involved in proteolysis. The protein is Adapter protein MecA of Exiguobacterium sibiricum (strain DSM 17290 / CCUG 55495 / CIP 109462 / JCM 13490 / 255-15).